The chain runs to 845 residues: Protein SEY1 (845 aa).

A coiled-coil region spans residues 1–29; sequence MELNVDSAKQLLAEHEQELQSAHDAHSIL. Topologically, residues 1–749 are cytoplasmic; it reads MELNVDSAKQ…KRATVSSIAQ (749 aa). The 223-residue stretch at 112 to 334 folds into the GB1/RHD3-type G domain; the sequence is GFGYDLCAVL…DPNFVFKTEY (223 aa). 122–129 is a binding site for GTP; the sequence is GSQSTGKS. Residues 750–770 traverse the membrane as a helical segment; sequence VPLWMYGVMLVLGWNELMAIL. Residues 771–773 are Lumenal-facing; that stretch reads SSP. The helical transmembrane segment at 774–794 threads the bilayer; sequence VYFAFLLVLIASAYIVWRLNL. Over 795–845 the chain is Cytoplasmic; the sequence is SGPLISVLRAVANEVHRLADAQLRTHFSQPLREPRPPAESRPAEQIELEPN. The tract at residues 823-845 is disordered; sequence QPLREPRPPAESRPAEQIELEPN. The segment covering 826–838 has biased composition (basic and acidic residues); the sequence is REPRPPAESRPAE.

Belongs to the TRAFAC class dynamin-like GTPase superfamily. GB1/RHD3 GTPase family. RHD3 subfamily.

It localises to the endoplasmic reticulum membrane. Its function is as follows. Cooperates with the reticulon proteins and tubule-shaping DP1 family proteins to generate and maintain the structure of the tubular endoplasmic reticulum network. Has GTPase activity, which is required for its function in ER organization. This is Protein SEY1 from Mycosarcoma maydis (Corn smut fungus).